Here is a 970-residue protein sequence, read N- to C-terminus: Probable histidine kinase 6 (970 aa).

Residues 1-12 (MGKPEARSGWRN) are Cytoplasmic-facing. Residues 13-33 (AAAAAWVLVAVACAAYMHWHL) form a helical membrane-spanning segment. The Extracellular portion of the chain corresponds to 34–306 (RRETMDRAEE…YRQKPPLPWS (273 aa)). A CHASE domain is found at 82–294 (FPSAIDQDTF…GDPFRAHEMR (213 aa)). The helical transmembrane segment at 307 to 327 (AITNPLGTFVIWMLVGYIICA) threads the bilayer. Topologically, residues 328–970 (AWSRYDKVSE…LVVGTKESAV (643 aa)) are cytoplasmic. The Histidine kinase domain maps to 362–651 (TVSHEIRTPM…TFTFSAVLKR (290 aa)). Position 365 is a phosphohistidine; by autocatalysis (His365). Response regulatory domains follow at residues 676–802 (KAIL…QQLL) and 827–962 (NILI…SRLV). At Asp877 the chain carries 4-aspartylphosphate.

In terms of processing, activation probably requires a transfer of a phosphate group between a His in the transmitter domain and an Asp of the receiver domain. Highly expressed in spikelets and at lower levels in roots, young leaves, mature leaves and stems.

It localises to the cell membrane. The enzyme catalyses ATP + protein L-histidine = ADP + protein N-phospho-L-histidine.. In terms of biological role, cytokinin receptor related to bacterial two-component regulators. Functions as a histidine kinase and transmits the stress signal to a downstream MAPK cascade. This chain is Probable histidine kinase 6, found in Oryza sativa subsp. japonica (Rice).